A 340-amino-acid chain; its full sequence is Cytoskeleton protein RodZ (340 aa).

Topologically, residues 1-111 (MNTEATQEKS…LGKQRKKRDG (111 aa)) are cytoplasmic. The HTH cro/C1-type domain occupies 19–79 (LRTAREQMGL…RLVHVPEEEL (61 aa)). A DNA-binding region (H-T-H motif) is located at residues 30 to 49 (QQNVAERLCLKLSTIRDIEE). Residues 112-132 (WLMIFTWLVLFVVLGLTGAWW) traverse the membrane as a helical; Signal-anchor for type II membrane protein segment. The Periplasmic portion of the chain corresponds to 133-340 (WQNHKAAQDD…QVARLTVGAP (208 aa)). Positions 162–252 (ALSDDNANGG…AAPLPTGSAA (91 aa)) are disordered. The segment covering 183–201 (ATANNAPSSVTATSDNGTP) has biased composition (polar residues). Residues 202 to 233 (AATAQSSQVTASNAAPAANAVNDNTPPVAVAP) are compositionally biased toward low complexity.

Belongs to the RodZ family.

Its subcellular location is the cell inner membrane. In terms of biological role, cytoskeletal protein that is involved in cell-shape control through regulation of the length of the long axis. In Erwinia tasmaniensis (strain DSM 17950 / CFBP 7177 / CIP 109463 / NCPPB 4357 / Et1/99), this protein is Cytoskeleton protein RodZ.